A 763-amino-acid chain; its full sequence is Dual specificity tyrosine-phosphorylation-regulated kinase 1A (763 aa).

A Phosphoserine modification is found at serine 14. A disordered region spans residues 32-57 (GQMPHSHQYSDRRQPNISDQQVSALS). Residues 46–57 (PNISDQQVSALS) are compositionally biased toward polar residues. The residue at position 111 (tyrosine 111) is a Phosphotyrosine; by autocatalysis. Residues 115–136 (KKRRHQQGQGDDSSHKKERKVY) form a disordered region. The short motif at 117-134 (RRHQQGQGDDSSHKKERK) is the Bipartite nuclear localization signal element. Position 140 is a phosphotyrosine; by autocatalysis (tyrosine 140). Tyrosine 145 carries the post-translational modification Phosphotyrosine. Residue tyrosine 159 is modified to Phosphotyrosine; by autocatalysis. The Protein kinase domain maps to 159 to 479 (YEIDSLIGKG…PYYALQHSFF (321 aa)). 165–173 (IGKGSFGQV) is a binding site for ATP. Tyrosine 177 bears the Phosphotyrosine; by autocatalysis mark. Lysine 188 serves as a coordination point for ATP. Phosphotyrosine; by autocatalysis is present on tyrosine 219. 238–241 (FEML) serves as a coordination point for ATP. Aspartate 287 acts as the Proton acceptor in catalysis. Serine 310 is subject to Phosphoserine; by autocatalysis. Phosphotyrosine; by autocatalysis occurs at positions 319 and 321. A Phosphothreonine; by autocatalysis modification is found at threonine 402. The tract at residues 408–442 (TKDGKREYKPPGTRKLHNILGVETGGPGGRRAGES) is disordered. At tyrosine 449 the chain carries Phosphotyrosine; by autocatalysis. Over residues 485 to 501 (EGTNTSNSVSTSPAMEQ) the composition is skewed to polar residues. 3 disordered regions span residues 485–540 (EGTN…HSGG), 596–679 (NALH…GNQA), and 744–763 (DREESPMTGVCVQQSPVASS). Residues 502–525 (SQSSGTTSSTSSSSGGSSGTSNSG) show a composition bias toward low complexity. Serine 529 and serine 538 each carry phosphoserine. Residues 595–625 (QNALHHHHGNSSHHHHHHHHHHHHHGQQALG) form a histidine-rich domain (HRD) region. Residues 598–620 (LHHHHGNSSHHHHHHHHHHHHHG) show a composition bias toward basic residues. A compositionally biased stretch (polar residues) spans 634-645 (NSPTNSSSTQDS). Residues 654–672 (SMTSLSSSTTSSSTSSSST) are compositionally biased toward low complexity. A phosphoserine mark is found at serine 748 and serine 758. Residues 754-763 (CVQQSPVASS) are compositionally biased toward polar residues.

Belongs to the protein kinase superfamily. CMGC Ser/Thr protein kinase family. MNB/DYRK subfamily. As to quaternary structure, interacts with RAD54L2/ARIP4. Interacts with CRY2. Interacts with RANBP9. Interacts with WDR68. Interacts with SIRT1. In terms of assembly, (Microbial infection) Interacts with human adenovirus 5 E1A protein. In terms of processing, autophosphorylated on numerous tyrosine residues. Can also autophosphorylate on serine and threonine residues (in vitro). Ubiquitous. Highest levels in skeletal muscle, testis, fetal lung and fetal kidney.

The protein localises to the nucleus. The protein resides in the nucleus speckle. The catalysed reaction is L-seryl-[protein] + ATP = O-phospho-L-seryl-[protein] + ADP + H(+). It catalyses the reaction L-threonyl-[protein] + ATP = O-phospho-L-threonyl-[protein] + ADP + H(+). It carries out the reaction L-tyrosyl-[protein] + ATP = O-phospho-L-tyrosyl-[protein] + ADP + H(+). The enzyme catalyses [DNA-directed RNA polymerase] + ATP = phospho-[DNA-directed RNA polymerase] + ADP + H(+). With respect to regulation, inhibited by RANBP9. Inhibited by harmine, leucettamine B and leucettine L41. Functionally, dual-specificity kinase which possesses both serine/threonine and tyrosine kinase activities. Exhibits a substrate preference for proline at position P+1 and arginine at position P-3. Plays an important role in double-strand breaks (DSBs) repair following DNA damage. Mechanistically, phosphorylates RNF169 and increases its ability to block accumulation of TP53BP1 at the DSB sites thereby promoting homologous recombination repair (HRR). Also acts as a positive regulator of transcription by acting as a CTD kinase that mediates phosphorylation of the CTD (C-terminal domain) of the large subunit of RNA polymerase II (RNAP II) POLR2A. May play a role in a signaling pathway regulating nuclear functions of cell proliferation. Modulates alternative splicing by phosphorylating the splice factor SRSF6. Has pro-survival function and negatively regulates the apoptotic process. Promotes cell survival upon genotoxic stress through phosphorylation of SIRT1. This in turn inhibits p53/TP53 activity and apoptosis. Phosphorylates SEPTIN4, SEPTIN5 and SF3B1 at 'Thr-434'. This Homo sapiens (Human) protein is Dual specificity tyrosine-phosphorylation-regulated kinase 1A.